The chain runs to 62 residues: Sauvatide (62 aa).

Residues 1–24 (MDILKKSLFLILFLGLVSISFCDG) form the signal peptide. The propeptide occupies 25-46 (EKRQDDDEANESEEKKEIHEVE). Position 58 is a lysine amide (K58).

As to expression, expressed by the skin glands.

The protein localises to the secreted. Induces contraction of smooth muscle in isolated rat urinary bladder with an EC(50) value of 2.2nM. This Phyllomedusa sauvagei (Sauvage's leaf frog) protein is Sauvatide.